Consider the following 367-residue polypeptide: Flagellar P-ring protein (367 aa).

The signal sequence occupies residues Met-1–Ala-21.

The protein belongs to the FlgI family. As to quaternary structure, the basal body constitutes a major portion of the flagellar organelle and consists of four rings (L,P,S, and M) mounted on a central rod.

The protein resides in the periplasm. It is found in the bacterial flagellum basal body. Functionally, assembles around the rod to form the L-ring and probably protects the motor/basal body from shearing forces during rotation. The protein is Flagellar P-ring protein of Nitrosococcus oceani (strain ATCC 19707 / BCRC 17464 / JCM 30415 / NCIMB 11848 / C-107).